Reading from the N-terminus, the 56-residue chain is Small ribosomal subunit protein uS14 (56 aa).

4 residues coordinate Zn(2+): Cys-21, Cys-24, Cys-39, and Cys-42.

It belongs to the universal ribosomal protein uS14 family. In terms of assembly, component of the 40S small ribosomal subunit. Zn(2+) serves as cofactor.

Its subcellular location is the cytoplasm. It is found in the cytosol. The protein resides in the rough endoplasmic reticulum. In terms of biological role, component of the small ribosomal subunit. The ribosome is a large ribonucleoprotein complex responsible for the synthesis of proteins in the cell. In Hippocampus comes (Tiger tail seahorse), this protein is Small ribosomal subunit protein uS14 (rps29).